The primary structure comprises 251 residues: Ubiquinone/menaquinone biosynthesis C-methyltransferase UbiE (251 aa).

S-adenosyl-L-methionine contacts are provided by residues Thr-74, Asp-95, 123 to 124, and Ser-140; that span reads NA.

This sequence belongs to the class I-like SAM-binding methyltransferase superfamily. MenG/UbiE family.

The enzyme catalyses a 2-demethylmenaquinol + S-adenosyl-L-methionine = a menaquinol + S-adenosyl-L-homocysteine + H(+). It carries out the reaction a 2-methoxy-6-(all-trans-polyprenyl)benzene-1,4-diol + S-adenosyl-L-methionine = a 5-methoxy-2-methyl-3-(all-trans-polyprenyl)benzene-1,4-diol + S-adenosyl-L-homocysteine + H(+). Its pathway is quinol/quinone metabolism; menaquinone biosynthesis; menaquinol from 1,4-dihydroxy-2-naphthoate: step 2/2. It functions in the pathway cofactor biosynthesis; ubiquinone biosynthesis. Its function is as follows. Methyltransferase required for the conversion of demethylmenaquinol (DMKH2) to menaquinol (MKH2) and the conversion of 2-polyprenyl-6-methoxy-1,4-benzoquinol (DDMQH2) to 2-polyprenyl-3-methyl-6-methoxy-1,4-benzoquinol (DMQH2). This chain is Ubiquinone/menaquinone biosynthesis C-methyltransferase UbiE, found in Cronobacter sakazakii (strain ATCC BAA-894) (Enterobacter sakazakii).